The sequence spans 284 residues: MKRNPVVAGMFYPAEYHELLEMIEYCYLSPRGPKELPSKRGNYTKPLGIVSPHAGYIYSGPVAAHGYKKISENVSGEVTAIILGPNHTGLGSGISTMKGIWKTPFGDMEIDNEFADKLWKECDVLDIDENSHLREHSIEVQLPFLKHLEDLNIAKFKFVPISMMMQDYETSIDVGYFIAKVAKEMNRKIIIIASTDFSHYEPQESASKKDAIVIKDILELKDEEIFIDVVTHNISMCGYGPVIAMVKAMKDLGAKTANLLYYSTSGDVTKDYSEVVGYASILVK.

The protein belongs to the MEMO1 family.

The sequence is that of MEMO1 family protein MmarC6_1286 from Methanococcus maripaludis (strain C6 / ATCC BAA-1332).